Consider the following 981-residue polypeptide: uncharacterized protein (981 aa).

5 disordered regions span residues 65–133, 149–463, 491–580, 592–834, and 861–891; these read NIDN…SNNS, SSNS…NKIE, SNNI…DSPL, EQTN…LNQV, and VQNDTNSSPISQQLSTSSSPFKSTGGSNDGN. The segment covering 75-88 has biased composition (acidic residues); that stretch reads SSDDDDDDDDDDDY. Composition is skewed to low complexity over residues 89–133, 149–158, and 170–181; these read NNNN…SNNS, SSNSINNNDN, and SAKTTSSLTSSK. Basic and acidic residues predominate over residues 182–195; that stretch reads RSLDSRNRNRDRSY. Positions 196 to 206 are enriched in basic residues; the sequence is TRSRSRSRSRS. Over residues 207-227 the composition is skewed to low complexity; sequence YSRGFSSLSRSRSRSRSISSR. Positions 228–269 are enriched in basic residues; sequence SRSRSRSRRSRSRSSRSRSRSRSKSKSKSRRSRSRSRSRRSR. Over residues 270 to 292 the composition is skewed to basic and acidic residues; the sequence is SRSDSRSRSDSRGRSRSRSDSRK. Positions 314–358 are enriched in basic residues; that stretch reads SSKRHQNSRKRNRSYSRSRTRSWSRSRTRSRSRRRYGGRTFRSPR. Basic and acidic residues predominate over residues 359–452; it reads RSRDDSRDRG…SQSPHNEKNK (94 aa). Residues 491 to 553 show a composition bias toward low complexity; that stretch reads SNNINNNNIK…SHNNTNGNVN (63 aa). Polar residues-rich tracts occupy residues 554 to 576 and 605 to 622; these read GVSKTTSSPASDNSTPENISTDL and ESNNNGNDRFKTKCSSTE. The segment covering 623–634 has biased composition (basic and acidic residues); the sequence is NENKNRENEKNN. Low complexity-rich tracts occupy residues 635-820 and 867-891; these read SENS…NNNS and SSPISQQLSTSSSPFKSTGGSNDGN.

This is an uncharacterized protein from Dictyostelium discoideum (Social amoeba).